The primary structure comprises 120 residues: Large ribosomal subunit protein uL18 (120 aa).

It belongs to the universal ribosomal protein uL18 family. In terms of assembly, part of the 50S ribosomal subunit; part of the 5S rRNA/L5/L18/L25 subcomplex. Contacts the 5S and 23S rRNAs.

In terms of biological role, this is one of the proteins that bind and probably mediate the attachment of the 5S RNA into the large ribosomal subunit, where it forms part of the central protuberance. In Clostridium botulinum (strain Eklund 17B / Type B), this protein is Large ribosomal subunit protein uL18.